The primary structure comprises 197 residues: C4-dicarboxylate transport transcriptional regulatory protein DctR (197 aa).

Residues 4-120 (TVHIVDDEES…HIVDIALSAI (117 aa)) enclose the Response regulatory domain. 4-aspartylphosphate is present on D53. Positions 128 to 135 (AEAQAREA) are inter-domain linker. The HTH luxR-type domain maps to 136-197 (VAARRASLSA…RNIADLARMT (62 aa)). Positions 160 to 179 (NKQIAERLGIAMRTVEVHRS) form a DNA-binding region, H-T-H motif.

Post-translationally, phosphorylated by DctS.

The protein resides in the cytoplasm. Member of the two-component regulatory system DctS/DctR involved in the transport of C4-dicarboxylates. DctR functions as a transcriptional repressor of genes for C4-dicarboxylate transport. The protein is C4-dicarboxylate transport transcriptional regulatory protein DctR (dctR) of Rhodobacter capsulatus (Rhodopseudomonas capsulata).